The sequence spans 1527 residues: Lysophospholipase nte1 (1527 aa).

Residues methionine 1–glycine 69 lie on the Cytoplasmic side of the membrane. Residues tryptophan 70 to isoleucine 90 traverse the membrane as a helical segment. The Lumenal segment spans residues threonine 91–threonine 112. Residues methionine 113–isoleucine 133 traverse the membrane as a helical segment. Residues arginine 134–isoleucine 1527 lie on the Cytoplasmic side of the membrane. Disordered regions lie at residues alanine 240–valine 259, leucine 299–isoleucine 387, glutamate 576–arginine 596, and alanine 750–serine 785. Over residues histidine 355–threonine 373 the composition is skewed to basic and acidic residues. A nucleoside 3',5'-cyclic phosphate-binding positions include glycine 685 to valine 804 and arginine 846 to arginine 966. Residues arginine 761 to serine 771 show a composition bias toward low complexity. The PNPLA domain occupies leucine 1224 to lysine 1388. Residues glycine 1228–glycine 1233 carry the GXGXXG motif. The short motif at glycine 1255–glycine 1259 is the GXSXG element. The active-site Nucleophile is serine 1257. Aspartate 1375 serves as the catalytic Proton acceptor. The DGA/G signature appears at aspartate 1375–glycine 1377.

Belongs to the NTE family.

It is found in the endoplasmic reticulum membrane. The enzyme catalyses a 1-acyl-sn-glycero-3-phosphocholine + H2O = sn-glycerol 3-phosphocholine + a fatty acid + H(+). Inhibited by organophosphorus esters. Its function is as follows. Intracellular phospholipase B that catalyzes the double deacylation of phosphatidylcholine (PC) to glycerophosphocholine (GroPCho). Plays an important role in membrane lipid homeostasis. Responsible for the rapid PC turnover in response to inositol, elevated temperatures, or when choline is present in the growth medium. This chain is Lysophospholipase nte1 (nte1), found in Aspergillus terreus (strain NIH 2624 / FGSC A1156).